An 82-amino-acid chain; its full sequence is uncharacterized protein (82 aa).

2 helical membrane passes run 22–39 (WASD…MFIA) and 46–65 (LKMG…TWVI).

The protein resides in the cell membrane. This is an uncharacterized protein from Bacillus subtilis (strain 168).